We begin with the raw amino-acid sequence, 159 residues long: 3-dehydroquinate dehydratase (159 aa).

Catalysis depends on tyrosine 22, which acts as the Proton acceptor. Residues asparagine 73, histidine 79, and aspartate 86 each coordinate substrate. The Proton donor role is filled by histidine 99. Substrate contacts are provided by residues 100 to 101 (IS) and arginine 110.

The protein belongs to the type-II 3-dehydroquinase family. Homododecamer.

It carries out the reaction 3-dehydroquinate = 3-dehydroshikimate + H2O. It functions in the pathway metabolic intermediate biosynthesis; chorismate biosynthesis; chorismate from D-erythrose 4-phosphate and phosphoenolpyruvate: step 3/7. Catalyzes a trans-dehydration via an enolate intermediate. The sequence is that of 3-dehydroquinate dehydratase from Campylobacter jejuni subsp. doylei (strain ATCC BAA-1458 / RM4099 / 269.97).